A 77-amino-acid chain; its full sequence is DNA-directed RNA polymerase subunit omega (77 aa).

It belongs to the RNA polymerase subunit omega family. As to quaternary structure, the RNAP catalytic core consists of 2 alpha, 1 beta, 1 beta' and 1 omega subunit. When a sigma factor is associated with the core the holoenzyme is formed, which can initiate transcription.

The catalysed reaction is RNA(n) + a ribonucleoside 5'-triphosphate = RNA(n+1) + diphosphate. Promotes RNA polymerase assembly. Latches the N- and C-terminal regions of the beta' subunit thereby facilitating its interaction with the beta and alpha subunits. This Nitratidesulfovibrio vulgaris (strain ATCC 29579 / DSM 644 / CCUG 34227 / NCIMB 8303 / VKM B-1760 / Hildenborough) (Desulfovibrio vulgaris) protein is DNA-directed RNA polymerase subunit omega.